A 320-amino-acid polypeptide reads, in one-letter code: Probable arabinan endo-1,5-alpha-L-arabinosidase C (320 aa).

A signal peptide spans 1–16 (MYRSTLLFLFIALVNA). The active-site Proton acceptor is the D31. N73, N137, and N191 each carry an N-linked (GlcNAc...) asparagine glycan. The active-site Proton donor is E199.

The protein belongs to the glycosyl hydrolase 43 family.

The protein resides in the secreted. The catalysed reaction is Endohydrolysis of (1-&gt;5)-alpha-arabinofuranosidic linkages in (1-&gt;5)-arabinans.. The protein operates within glycan metabolism; L-arabinan degradation. Its function is as follows. Endo-1,5-alpha-L-arabinanase involved in degradation of pectin. Its preferred substrate is linear 1,5-alpha-L-arabinan. The protein is Probable arabinan endo-1,5-alpha-L-arabinosidase C (abnC) of Aspergillus terreus (strain NIH 2624 / FGSC A1156).